A 72-amino-acid chain; its full sequence is DNA-directed RNA polymerase subunit epsilon (72 aa).

It belongs to the RNA polymerase subunit epsilon family. As to quaternary structure, RNAP is composed of a core of 2 alpha, a beta and a beta' subunit. The core is associated with a delta subunit, and at least one of epsilon or omega. When a sigma factor is associated with the core the holoenzyme is formed, which can initiate transcription.

It carries out the reaction RNA(n) + a ribonucleoside 5'-triphosphate = RNA(n+1) + diphosphate. In terms of biological role, a non-essential component of RNA polymerase (RNAP). The protein is DNA-directed RNA polymerase subunit epsilon of Lactiplantibacillus plantarum (strain ATCC BAA-793 / NCIMB 8826 / WCFS1) (Lactobacillus plantarum).